A 428-amino-acid chain; its full sequence is Lysophosphatidic acid phosphatase type 6 (428 aa).

The N-terminal 32 residues, 1–32 (MITGVFSMRLWTPVGVLTSLAYCLHQRRVALA), are a transit peptide targeting the mitochondrion. Residues 58-168 (RHGARSPRKP…VFIRSTNIFR (111 aa)) are substrate binding. The active-site Nucleophile is H59. The Proton donor role is filled by D335.

It belongs to the histidine acid phosphatase family. In terms of assembly, monomer.

The protein resides in the mitochondrion. The catalysed reaction is a phosphate monoester + H2O = an alcohol + phosphate. It carries out the reaction 1-(9Z-octadecenoyl)-sn-glycero-3-phosphate + H2O = 1-(9Z-octadecenoyl)-sn-glycerol + phosphate. Its function is as follows. Hydrolyzes lysophosphatidic acid (LPA) containing a medium length fatty acid chain to the corresponding monoacylglycerol. Has highest activity with lysophosphatidic acid containing myristate (C14:0), monounsaturated oleate (C18:1) or palmitate (C16:0), and lower activity with C18:0 and C6:0 lysophosphatidic acid. This Pongo abelii (Sumatran orangutan) protein is Lysophosphatidic acid phosphatase type 6 (ACP6).